The sequence spans 356 residues: MEKIVVALGKRSYPISIGEGLLTHAELFKSAIKGKRVMIVSNEIVAPLYLACCKETLIDFQIDEIILPDGEKFKNLHTFEIILTALLSNKHARDTTIIALGGGVIGDMAGFAAACYQRGVPFIQVPTTVLSQVDSSVGGKTAVNHPLGKNMIGAFYQPQSVIIDIDCLKTLPAREFSAGMAEVIKYGILYDQAFFIWLEENVTAIKTLQPAAITYMIKRCCEIKAEIVSLDEKEGGIRALLNLGHTFGHAIEAEQGYGNWLHGEAVASGMVLAAKTALNLGLIESAQIEQIILLIKQFDLPVNAPENMHYDQFFDHMQLDKKVLDGKLRLILPTSIGRCEIFDNVSETVLRSVIES.

Residues 69–74 (DGEKFK), 103–107 (GVIGD), 127–128 (TT), Lys-140, Lys-149, and 167–170 (CLKT) contribute to the NAD(+) site. Glu-182, His-245, and His-262 together coordinate Zn(2+).

Belongs to the sugar phosphate cyclases superfamily. Dehydroquinate synthase family. Co(2+) is required as a cofactor. Requires Zn(2+) as cofactor. The cofactor is NAD(+).

Its subcellular location is the cytoplasm. It catalyses the reaction 7-phospho-2-dehydro-3-deoxy-D-arabino-heptonate = 3-dehydroquinate + phosphate. The protein operates within metabolic intermediate biosynthesis; chorismate biosynthesis; chorismate from D-erythrose 4-phosphate and phosphoenolpyruvate: step 2/7. In terms of biological role, catalyzes the conversion of 3-deoxy-D-arabino-heptulosonate 7-phosphate (DAHP) to dehydroquinate (DHQ). The chain is 3-dehydroquinate synthase from Psychromonas ingrahamii (strain DSM 17664 / CCUG 51855 / 37).